Consider the following 312-residue polypeptide: L-lactate dehydrogenase (312 aa).

Residues Val11, Asp32, Arg37, and 76 to 77 (GA) contribute to the NAD(+) site. Residues Gln79, Arg85, and 117–120 (NPVD) each bind substrate. Residues 115 to 117 (VSN) and Thr140 contribute to the NAD(+) site. 145-148 (DTAR) is a substrate binding site. Positions 150 and 165 each coordinate beta-D-fructose 1,6-bisphosphate. The active-site Proton acceptor is His172. The residue at position 217 (Tyr217) is a Phosphotyrosine. Thr226 lines the substrate pocket.

It belongs to the LDH/MDH superfamily. LDH family. Homotetramer.

The protein resides in the cytoplasm. The enzyme catalyses (S)-lactate + NAD(+) = pyruvate + NADH + H(+). The protein operates within fermentation; pyruvate fermentation to lactate; (S)-lactate from pyruvate: step 1/1. Its activity is regulated as follows. Allosterically activated by fructose 1,6-bisphosphate (FBP). Catalyzes the conversion of lactate to pyruvate. The sequence is that of L-lactate dehydrogenase from Pseudothermotoga lettingae (strain ATCC BAA-301 / DSM 14385 / NBRC 107922 / TMO) (Thermotoga lettingae).